We begin with the raw amino-acid sequence, 324 residues long: Glyoxylate/hydroxypyruvate reductase B (324 aa).

Catalysis depends on residues R237 and E266. H285 functions as the Proton donor in the catalytic mechanism.

It belongs to the D-isomer specific 2-hydroxyacid dehydrogenase family. GhrB subfamily. In terms of assembly, homodimer.

The protein resides in the cytoplasm. The catalysed reaction is glycolate + NADP(+) = glyoxylate + NADPH + H(+). The enzyme catalyses (R)-glycerate + NAD(+) = 3-hydroxypyruvate + NADH + H(+). It carries out the reaction (R)-glycerate + NADP(+) = 3-hydroxypyruvate + NADPH + H(+). Catalyzes the NADPH-dependent reduction of glyoxylate and hydroxypyruvate into glycolate and glycerate, respectively. The protein is Glyoxylate/hydroxypyruvate reductase B of Cronobacter sakazakii (strain ATCC BAA-894) (Enterobacter sakazakii).